A 470-amino-acid polypeptide reads, in one-letter code: Nuclear receptor subfamily 0 group B member 1 (470 aa).

3 consecutive repeat copies span residues 1-67, 68-133, and 134-200. Residues 1 to 253 are 4 X 67 AA tandem repeats; the sequence is MAGENHQWQG…RPVALKSPQV (253 aa). 3 short sequence motifs (LXXLL motif) span residues 13–17, 80–84, and 146–150; these read LYNML, LYSML, and LYSLL. The 4; truncated repeat unit spans residues 201–253; sequence FCGEDHPQQGSTLYCMPTSTNQAQAAPEERPRAPWWDTSSGALRPVALKSPQV. In terms of domain architecture, NR LBD spans 205–469; sequence DHPQQGSTLY…DMMLEMLCTK (265 aa). Residues 461–466 carry the AF-2 motif motif; that stretch reads MMLEML.

This sequence belongs to the nuclear hormone receptor family. NR0 subfamily. In terms of assembly, homodimer. Interacts with NR5A1, NR5A2, NR0B2 and with COPS2. Interacts with ESRRB; represses ESRRB activity at the GATA6 promoter.

It is found in the nucleus. The protein localises to the cytoplasm. In terms of biological role, nuclear receptor that lacks a DNA-binding domain and acts as a corepressor that inhibits the transcriptional activity of other nuclear receptors through heterodimeric interactions. Component of a cascade required for the development of the hypothalamic-pituitary-adrenal-gonadal axis. May also have a role in the development of the embryo and in the maintenance of embryonic stem cell pluripotency. The chain is Nuclear receptor subfamily 0 group B member 1 (NR0B1) from Pan troglodytes (Chimpanzee).